Here is a 340-residue protein sequence, read N- to C-terminus: Eukaryotic translation initiation factor 3 subunit I (340 aa).

WD repeat units follow at residues 8-47 (GHER…RLGT), 50-89 (GHQG…CVKV), 91-135 (DFPT…GEGN), 150-189 (CEQS…QLQN), 194-233 (EFDY…VMKT), and 291-330 (GHFG…FDFM).

The protein belongs to the eIF-3 subunit I family. Component of the eukaryotic translation initiation factor 3 (eIF-3) complex.

Its subcellular location is the cytoplasm. In terms of biological role, component of the eukaryotic translation initiation factor 3 (eIF-3) complex, which is involved in protein synthesis of a specialized repertoire of mRNAs and, together with other initiation factors, stimulates binding of mRNA and methionyl-tRNAi to the 40S ribosome. The eIF-3 complex specifically targets and initiates translation of a subset of mRNAs involved in cell proliferation. This chain is Eukaryotic translation initiation factor 3 subunit I, found in Coccidioides immitis (strain RS) (Valley fever fungus).